We begin with the raw amino-acid sequence, 751 residues long: WD repeat-containing protein 91 (751 aa).

Residues 183–205 (QKIACLQEENEIMRQKLFALQAE) adopt a coiled-coil conformation. Residues 237–398 (ELGSNIMSSH…GARKEEKPAQ (162 aa)) form a disordered region. Residues 238–267 (LGSNIMSSHSNTNMNTPSQRTSGFLSSLLA) show a composition bias toward polar residues. Over residues 356–373 (TEKKAENSDADPDLRSDT) the composition is skewed to basic and acidic residues. WD repeat units lie at residues 410 to 449 (EHHS…QTKA), 452 to 492 (ISKS…NLCE), 517 to 559 (SAAA…QQLQ), 564 to 603 (PVPI…CALS), 606 to 645 (AHMG…QKVS), 668 to 706 (VQFP…STLE), and 713 to 751 (GHRA…AQKS).

It belongs to the WD repeat WDR91 family.

Its subcellular location is the early endosome membrane. The protein localises to the late endosome membrane. Functions as a negative regulator of the PI3 kinase/PI3K activity associated with endosomal membranes. By modifying the phosphatidylinositol 3-phosphate/PtdInsP3 content of endosomal membranes may regulate endosome fusion, recycling, sorting and early to late endosome transport. The protein is WD repeat-containing protein 91 of Xenopus tropicalis (Western clawed frog).